The primary structure comprises 1011 residues: DNA-directed RNA polymerase subunit beta'' (1011 aa).

4 residues coordinate Zn(2+): Cys-216, Cys-282, Cys-288, and Cys-291.

Belongs to the RNA polymerase beta' chain family. RpoC2 subfamily. In plastids the minimal PEP RNA polymerase catalytic core is composed of four subunits: alpha, beta, beta', and beta''. When a (nuclear-encoded) sigma factor is associated with the core the holoenzyme is formed, which can initiate transcription. Zn(2+) serves as cofactor.

It localises to the plastid. Its subcellular location is the chloroplast. It catalyses the reaction RNA(n) + a ribonucleoside 5'-triphosphate = RNA(n+1) + diphosphate. In terms of biological role, DNA-dependent RNA polymerase catalyzes the transcription of DNA into RNA using the four ribonucleoside triphosphates as substrates. This is DNA-directed RNA polymerase subunit beta'' from Ostreococcus tauri.